Reading from the N-terminus, the 289-residue chain is Protoheme IX farnesyltransferase 2 (289 aa).

Helical transmembrane passes span 13 to 33 (LEIT…VPGS), 37 to 57 (IYDL…ASIF), 86 to 106 (LFFI…FILL), 109 to 129 (VTSA…TIIL), 137 to 157 (IVIG…SITG), 159 to 179 (VSAT…THFW), 207 to 227 (EFWI…PLFI), 232 to 252 (VGLL…YYVA), and 267 to 287 (AFHF…LILV).

Belongs to the UbiA prenyltransferase family. Protoheme IX farnesyltransferase subfamily.

The protein localises to the cell membrane. The catalysed reaction is heme b + (2E,6E)-farnesyl diphosphate + H2O = Fe(II)-heme o + diphosphate. Its pathway is porphyrin-containing compound metabolism; heme O biosynthesis; heme O from protoheme: step 1/1. Its function is as follows. Converts heme B (protoheme IX) to heme O by substitution of the vinyl group on carbon 2 of heme B porphyrin ring with a hydroxyethyl farnesyl side group. The protein is Protoheme IX farnesyltransferase 2 of Picrophilus torridus (strain ATCC 700027 / DSM 9790 / JCM 10055 / NBRC 100828 / KAW 2/3).